Consider the following 391-residue polypeptide: Imidazolonepropionase (391 aa).

Fe(3+)-binding residues include His-72 and His-74. Zn(2+) contacts are provided by His-72 and His-74. The 4-imidazolone-5-propanoate site is built by Arg-81, Tyr-139, and His-166. Tyr-139 is an N-formimidoyl-L-glutamate binding site. Residue His-229 coordinates Fe(3+). His-229 is a Zn(2+) binding site. Residue Gln-232 participates in 4-imidazolone-5-propanoate binding. Residue Asp-303 participates in Fe(3+) binding. Asp-303 contributes to the Zn(2+) binding site. Residues Asn-305 and Gly-307 each coordinate N-formimidoyl-L-glutamate. Residue Ser-308 participates in 4-imidazolone-5-propanoate binding.

It belongs to the metallo-dependent hydrolases superfamily. HutI family. Requires Zn(2+) as cofactor. Fe(3+) is required as a cofactor.

The protein resides in the cytoplasm. The enzyme catalyses 4-imidazolone-5-propanoate + H2O = N-formimidoyl-L-glutamate. The protein operates within amino-acid degradation; L-histidine degradation into L-glutamate; N-formimidoyl-L-glutamate from L-histidine: step 3/3. In terms of biological role, catalyzes the hydrolytic cleavage of the carbon-nitrogen bond in imidazolone-5-propanoate to yield N-formimidoyl-L-glutamate. It is the third step in the universal histidine degradation pathway. The polypeptide is Imidazolonepropionase (Streptomyces coelicolor (strain ATCC BAA-471 / A3(2) / M145)).